The following is a 376-amino-acid chain: Queuine tRNA-ribosyltransferase (376 aa).

Asp-93 serves as the catalytic Proton acceptor. Substrate-binding positions include 93 to 97, Asp-147, Gln-190, and Gly-217; that span reads DSGGF. An RNA binding region spans residues 248 to 254; the sequence is GVGTPDD. The active-site Nucleophile is Asp-267. The interval 272-276 is RNA binding; important for wobble base 34 recognition; the sequence is TRAGR.

It belongs to the queuine tRNA-ribosyltransferase family. As to quaternary structure, homodimer. Within each dimer, one monomer is responsible for RNA recognition and catalysis, while the other monomer binds to the replacement base PreQ1.

It carries out the reaction 7-aminomethyl-7-carbaguanine + guanosine(34) in tRNA = 7-aminomethyl-7-carbaguanosine(34) in tRNA + guanine. It participates in tRNA modification; tRNA-queuosine biosynthesis. In terms of biological role, catalyzes the base-exchange of a guanine (G) residue with the queuine precursor 7-aminomethyl-7-deazaguanine (PreQ1) at position 34 (anticodon wobble position) in tRNAs with GU(N) anticodons (tRNA-Asp, -Asn, -His and -Tyr). Catalysis occurs through a double-displacement mechanism. The nucleophile active site attacks the C1' of nucleotide 34 to detach the guanine base from the RNA, forming a covalent enzyme-RNA intermediate. The proton acceptor active site deprotonates the incoming PreQ1, allowing a nucleophilic attack on the C1' of the ribose to form the product. After dissociation, two additional enzymatic reactions on the tRNA convert PreQ1 to queuine (Q), resulting in the hypermodified nucleoside queuosine (7-(((4,5-cis-dihydroxy-2-cyclopenten-1-yl)amino)methyl)-7-deazaguanosine). This is Queuine tRNA-ribosyltransferase from Mesorhizobium japonicum (strain LMG 29417 / CECT 9101 / MAFF 303099) (Mesorhizobium loti (strain MAFF 303099)).